The sequence spans 339 residues: Phenylalanine--tRNA ligase alpha subunit (339 aa).

Glu-247 is a Mg(2+) binding site.

The protein belongs to the class-II aminoacyl-tRNA synthetase family. Phe-tRNA synthetase alpha subunit type 1 subfamily. Tetramer of two alpha and two beta subunits. Mg(2+) is required as a cofactor.

The protein resides in the cytoplasm. It catalyses the reaction tRNA(Phe) + L-phenylalanine + ATP = L-phenylalanyl-tRNA(Phe) + AMP + diphosphate + H(+). This chain is Phenylalanine--tRNA ligase alpha subunit, found in Deinococcus deserti (strain DSM 17065 / CIP 109153 / LMG 22923 / VCD115).